Here is a 255-residue protein sequence, read N- to C-terminus: ATP synthase subunit b 1 (255 aa).

The helical transmembrane segment at 5-22 (WITVAAQIVNFLLLIWLL) threads the bilayer.

The protein belongs to the ATPase B chain family. F-type ATPases have 2 components, F(1) - the catalytic core - and F(0) - the membrane proton channel. F(1) has five subunits: alpha(3), beta(3), gamma(1), delta(1), epsilon(1). F(0) has three main subunits: a(1), b(2) and c(10-14). The alpha and beta chains form an alternating ring which encloses part of the gamma chain. F(1) is attached to F(0) by a central stalk formed by the gamma and epsilon chains, while a peripheral stalk is formed by the delta and b chains.

The protein resides in the cell inner membrane. Its function is as follows. F(1)F(0) ATP synthase produces ATP from ADP in the presence of a proton or sodium gradient. F-type ATPases consist of two structural domains, F(1) containing the extramembraneous catalytic core and F(0) containing the membrane proton channel, linked together by a central stalk and a peripheral stalk. During catalysis, ATP synthesis in the catalytic domain of F(1) is coupled via a rotary mechanism of the central stalk subunits to proton translocation. Functionally, component of the F(0) channel, it forms part of the peripheral stalk, linking F(1) to F(0). This Dinoroseobacter shibae (strain DSM 16493 / NCIMB 14021 / DFL 12) protein is ATP synthase subunit b 1.